The primary structure comprises 932 residues: Protocadherin gamma-A8 (932 aa).

A signal peptide spans 1-29; that stretch reads MAAPQSRPRRGELILLCALLGTLWEIGRG. 6 Cadherin domains span residues 30–133, 134–242, 243–347, 348–452, 453–562, and 570–682; these read QIRY…NPKF, QVED…APVF, PHPI…RPEV, IITS…PPTF, PHAS…APEI, and DGST…KPSV. Topologically, residues 30–692 are extracellular; that stretch reads QIRYSVPEET…DPNDSSLTLY (663 aa). N-linked (GlcNAc...) asparagine glycosylation is present at Asn47. Residues Asn414, Asn419, and Asn545 are each glycosylated (N-linked (GlcNAc...) asparagine). An N-linked (GlcNAc...) asparagine glycan is attached at Asn685. The helical transmembrane segment at 693-713 threads the bilayer; the sequence is LVVAVAAISCVFLAFVAVLLG. At 714-932 the chain is on the cytoplasmic side; it reads LRLRRWHKSH…KKKSGKKEKK (219 aa). Disordered stretches follow at residues 804–841 and 902–932; these read ADHGQQAPPNTDWRFSQAQRPGTSGSQNGDDTGTWPNN and ATLTNAAGKRDGKAPAGGNGNKKKSGKKEKK. The span at 810-841 shows a compositional bias: polar residues; sequence APPNTDWRFSQAQRPGTSGSQNGDDTGTWPNN. Positions 922–932 are enriched in basic residues; that stretch reads NKKKSGKKEKK.

The protein localises to the cell membrane. In terms of biological role, potential calcium-dependent cell-adhesion protein. May be involved in the establishment and maintenance of specific neuronal connections in the brain. This Pan troglodytes (Chimpanzee) protein is Protocadherin gamma-A8 (PCDHGA8).